The chain runs to 480 residues: Glycogen synthase (480 aa).

Position 15 (Lys-15) interacts with ADP-alpha-D-glucose.

The protein belongs to the glycosyltransferase 1 family. Bacterial/plant glycogen synthase subfamily.

It catalyses the reaction [(1-&gt;4)-alpha-D-glucosyl](n) + ADP-alpha-D-glucose = [(1-&gt;4)-alpha-D-glucosyl](n+1) + ADP + H(+). Its pathway is glycan biosynthesis; glycogen biosynthesis. Functionally, synthesizes alpha-1,4-glucan chains using ADP-glucose. The chain is Glycogen synthase from Rhizobium johnstonii (strain DSM 114642 / LMG 32736 / 3841) (Rhizobium leguminosarum bv. viciae).